A 410-amino-acid chain; its full sequence is Mating-type locus allele B6 protein (410 aa).

The tract at residues 1 to 110 (MSRDPKLSLS…VNVASPAVEY (110 aa)) is variable domain between B alleles. A DNA-binding region (homeobox; TALE-type) is located at residues 107 to 184 (AVEYRNLSED…NARRRSGWSH (78 aa)). Residues 111–410 (RNLSEDLPAY…PFFCLSIAFV (300 aa)) form a highly conserved between B alleles region. 3 disordered regions span residues 202–224 (RAKLSSSNQSTPPSLTSEKPSDD), 278–335 (TPKP…TPEL), and 373–393 (KARGNRKVKALPKRAGKQQPD). The segment covering 205–219 (LSSSNQSTPPSLTSE) has biased composition (polar residues). The Nuclear localization signal signature appears at 276–308 (KKTPKPGMPRPVTTVAKRQPARKTKPAAKPKSR). Residues 294–307 (QPARKTKPAAKPKS) show a composition bias toward basic residues. Polar residues predominate over residues 312 to 335 (PRASTTPSIDSTLDSSKLESTPEL). Positions 333 to 410 (PELSMCSTAD…PFFCLSIAFV (78 aa)) are not essential for B6 function. The segment covering 375 to 388 (RGNRKVKALPKRAG) has biased composition (basic residues).

This sequence belongs to the TALE/M-ATYP homeobox family.

Its subcellular location is the nucleus. In terms of biological role, the B locus has at least 25 alleles, and any combination of two different B alleles yields a multimeric regulatory protein, that activates genes responsible for the pathogenicity and for the sexual development of the fungus within the corn plant. The protein is Mating-type locus allele B6 protein of Mycosarcoma maydis (Corn smut fungus).